A 745-amino-acid polypeptide reads, in one-letter code: Isocitrate dehydrogenase [NADP] 2 (745 aa).

The NADP(+) site is built by N87 and S89. The D-threo-isocitrate site is built by S134, N137, R141, R147, and K257. Position 352 (D352) interacts with Mg(2+). D-threo-isocitrate is bound by residues Y422 and R550. Mg(2+) is bound by residues D551 and D555. G587, S588, A589, H592, R603, D605, and R652 together coordinate NADP(+).

It belongs to the monomeric-type IDH family. As to quaternary structure, may form homotrimers. Also forms homotetramers at low salt concentration, which are dissociated into homodimers, but not into monomers, at high salt concentration (1 M). The cofactor is Mg(2+).

The catalysed reaction is D-threo-isocitrate + NADP(+) = 2-oxoglutarate + CO2 + NADPH. Catalyzes the oxidative decarboxylation of isocitrate to 2-oxoglutarate and carbon dioxide with the concomitant reduction of NADP(+). Cannot use NAD(+). The chain is Isocitrate dehydrogenase [NADP] 2 from Mycobacterium tuberculosis (strain ATCC 25618 / H37Rv).